A 155-amino-acid polypeptide reads, in one-letter code: Ribosomal RNA large subunit methyltransferase H (155 aa).

S-adenosyl-L-methionine-binding positions include leucine 72, glycine 103, and 122–127 (LSALTL).

It belongs to the RNA methyltransferase RlmH family. As to quaternary structure, homodimer.

The protein localises to the cytoplasm. It carries out the reaction pseudouridine(1915) in 23S rRNA + S-adenosyl-L-methionine = N(3)-methylpseudouridine(1915) in 23S rRNA + S-adenosyl-L-homocysteine + H(+). Functionally, specifically methylates the pseudouridine at position 1915 (m3Psi1915) in 23S rRNA. This chain is Ribosomal RNA large subunit methyltransferase H, found in Escherichia fergusonii (strain ATCC 35469 / DSM 13698 / CCUG 18766 / IAM 14443 / JCM 21226 / LMG 7866 / NBRC 102419 / NCTC 12128 / CDC 0568-73).